The following is a 255-amino-acid chain: Glutamate racemase (255 aa).

Substrate-binding positions include 7-8 (DS) and 39-40 (YG). Cys-70 functions as the Proton donor/acceptor in the catalytic mechanism. Position 71–72 (71–72 (NT)) interacts with substrate. The active-site Proton donor/acceptor is Cys-181. 182 to 183 (TH) is a binding site for substrate.

Belongs to the aspartate/glutamate racemases family.

The catalysed reaction is L-glutamate = D-glutamate. Its pathway is cell wall biogenesis; peptidoglycan biosynthesis. Provides the (R)-glutamate required for cell wall biosynthesis. The protein is Glutamate racemase of Helicobacter pylori (strain P12).